The primary structure comprises 322 residues: Phosphatidylserine decarboxylase proenzyme (322 aa).

Active-site charge relay system; for autoendoproteolytic cleavage activity residues include Asp-90, His-147, and Ser-254. The Schiff-base intermediate with substrate; via pyruvic acid; for decarboxylase activity role is filled by Ser-254. Ser-254 carries the post-translational modification Pyruvic acid (Ser); by autocatalysis. Positions 293 to 322 (PDAEPAPLPAEEIEAEHDASPLVDDKKDQV) are disordered. Basic and acidic residues predominate over residues 308–322 (EHDASPLVDDKKDQV).

It belongs to the phosphatidylserine decarboxylase family. PSD-B subfamily. Prokaryotic type I sub-subfamily. As to quaternary structure, heterodimer of a large membrane-associated beta subunit and a small pyruvoyl-containing alpha subunit. Requires pyruvate as cofactor. In terms of processing, is synthesized initially as an inactive proenzyme. Formation of the active enzyme involves a self-maturation process in which the active site pyruvoyl group is generated from an internal serine residue via an autocatalytic post-translational modification. Two non-identical subunits are generated from the proenzyme in this reaction, and the pyruvate is formed at the N-terminus of the alpha chain, which is derived from the carboxyl end of the proenzyme. The autoendoproteolytic cleavage occurs by a canonical serine protease mechanism, in which the side chain hydroxyl group of the serine supplies its oxygen atom to form the C-terminus of the beta chain, while the remainder of the serine residue undergoes an oxidative deamination to produce ammonia and the pyruvoyl prosthetic group on the alpha chain. During this reaction, the Ser that is part of the protease active site of the proenzyme becomes the pyruvoyl prosthetic group, which constitutes an essential element of the active site of the mature decarboxylase.

Its subcellular location is the cell membrane. The enzyme catalyses a 1,2-diacyl-sn-glycero-3-phospho-L-serine + H(+) = a 1,2-diacyl-sn-glycero-3-phosphoethanolamine + CO2. It functions in the pathway phospholipid metabolism; phosphatidylethanolamine biosynthesis; phosphatidylethanolamine from CDP-diacylglycerol: step 2/2. Its function is as follows. Catalyzes the formation of phosphatidylethanolamine (PtdEtn) from phosphatidylserine (PtdSer). The sequence is that of Phosphatidylserine decarboxylase proenzyme from Escherichia coli O139:H28 (strain E24377A / ETEC).